We begin with the raw amino-acid sequence, 557 residues long: Anti-Muellerian hormone type-2 receptor (557 aa).

A signal peptide spans 1-17 (MLGTLGLWTLLPAAAQV). The Extracellular portion of the chain corresponds to 18 to 144 (SPNRRTCVFF…QEPQATPGGP (127 aa)). 2 cysteine pairs are disulfide-bonded: cysteine 55-cysteine 79 and cysteine 92-cysteine 109. Asparagine 66 is a glycosylation site (N-linked (GlcNAc...) asparagine). Asparagine 119 carries N-linked (GlcNAc...) asparagine glycosylation. Residues 145–165 (IWMAQLLLGVFLVLLLSIIIL) traverse the membrane as a helical segment. At 166–557 (ALLQRKACRV…SVQQGSGSKS (392 aa)) the chain is on the cytoplasmic side. Residues 201–511 (LRFSQVIQEG…RLAALAYPQV (311 aa)) form the Protein kinase domain. ATP contacts are provided by residues 207 to 215 (IQEGGHAVV) and lysine 228. Aspartate 331 acts as the Proton acceptor in catalysis.

It belongs to the protein kinase superfamily. TKL Ser/Thr protein kinase family. TGFB receptor subfamily. In terms of assembly, interacts with type I receptor ACVR1. Mg(2+) is required as a cofactor. Mn(2+) serves as cofactor.

It is found in the membrane. It carries out the reaction L-threonyl-[receptor-protein] + ATP = O-phospho-L-threonyl-[receptor-protein] + ADP + H(+). The enzyme catalyses L-seryl-[receptor-protein] + ATP = O-phospho-L-seryl-[receptor-protein] + ADP + H(+). In terms of biological role, on ligand binding, forms a receptor complex consisting of two type II and two type I transmembrane serine/threonine kinases. Type II receptors phosphorylate and activate type I receptors which autophosphorylate, then bind and activate SMAD transcriptional regulators. Receptor for anti-Muellerian hormone. The polypeptide is Anti-Muellerian hormone type-2 receptor (Amhr2) (Rattus norvegicus (Rat)).